We begin with the raw amino-acid sequence, 396 residues long: MTTNTVSRKVAWLRVVTLAVAAFIFNTTEFVPVGLLSDIAQSFHMQTAQVGIMLTIYAWVVALMSLPFMLMTSQVERRKLLICLFVVFIASHVLSFLSWSFTVLVISRIGVAFAHAIFWSITASLAIRMAPAGKRAQALSLIATGTALAMVLGLPLGRIVGQYFGWRMTFFAIGIGALVTLLCLIKLLPLLPSEHSGSLKSLPLLFRRPALMSIYLLTVVVVTAHYTAYSYIEPFVQNIAGFSANFATALLLLLGGAGIIGSVIFGKLGNQYASALVSTAIALLLVCLALLLPAANSEIHLGVLSIFWGIAMMIIGLGMQVKVLALAPDATDVAMALFSGIFNIGIGAGALVGNQVSLHWSMSMIGYVGAVPAFAALIWSIIIFRRWPVTLEEQTQ.

Residues 1 to 14 (MTTNTVSRKVAWLR) are Cytoplasmic-facing. The helical transmembrane segment at 15-35 (VVTLAVAAFIFNTTEFVPVGL) threads the bilayer. The Periplasmic portion of the chain corresponds to 36 to 49 (LSDIAQSFHMQTAQ). Residues 50 to 70 (VGIMLTIYAWVVALMSLPFML) form a helical membrane-spanning segment. Residues 71–80 (MTSQVERRKL) are Cytoplasmic-facing. Residues 81 to 101 (LICLFVVFIASHVLSFLSWSF) form a helical membrane-spanning segment. Residue Thr102 is a topological domain, periplasmic. Residues 103-123 (VLVISRIGVAFAHAIFWSITA) form a helical membrane-spanning segment. Residues 124–135 (SLAIRMAPAGKR) are Cytoplasmic-facing. Residues 136 to 156 (AQALSLIATGTALAMVLGLPL) form a helical membrane-spanning segment. The Periplasmic portion of the chain corresponds to 157-169 (GRIVGQYFGWRMT). Residues 170 to 190 (FFAIGIGALVTLLCLIKLLPL) traverse the membrane as a helical segment. Topologically, residues 191-208 (LPSEHSGSLKSLPLLFRR) are cytoplasmic. Residues 209 to 229 (PALMSIYLLTVVVVTAHYTAY) form a helical membrane-spanning segment. Over 230–245 (SYIEPFVQNIAGFSAN) the chain is Periplasmic. A helical membrane pass occupies residues 246–266 (FATALLLLLGGAGIIGSVIFG). Residues 267–274 (KLGNQYAS) lie on the Cytoplasmic side of the membrane. The helical transmembrane segment at 275–295 (ALVSTAIALLLVCLALLLPAA) threads the bilayer. Residues 296–298 (NSE) lie on the Periplasmic side of the membrane. The chain crosses the membrane as a helical span at residues 299 to 319 (IHLGVLSIFWGIAMMIIGLGM). Residues 320-332 (QVKVLALAPDATD) are Cytoplasmic-facing. A helical membrane pass occupies residues 333–353 (VAMALFSGIFNIGIGAGALVG). The Periplasmic portion of the chain corresponds to 354–363 (NQVSLHWSMS). A helical transmembrane segment spans residues 364–384 (MIGYVGAVPAFAALIWSIIIF). Over 385-396 (RRWPVTLEEQTQ) the chain is Cytoplasmic.

The protein belongs to the major facilitator superfamily. SotB (TC 2.A.1.2) family.

Its subcellular location is the cell inner membrane. Involved in the efflux of sugars. The physiological role may be the reduction of the intracellular concentration of toxic sugars or sugar metabolites. This is Probable sugar efflux transporter from Shigella flexneri.